Consider the following 170-residue polypeptide: Protein BofC (170 aa).

The signal sequence occupies residues 1 to 30 (MKRFSTAYLLLGILCSAAVFLIGAPSRALG).

As to quaternary structure, monomer.

It localises to the forespore intermembrane space. Its function is as follows. Inhibits the SpoIVB zymogen from undergoing autocatalytic activation by an unknown mechanism, and in this way plays a role in the sigma-K checkpoint of sporulation. The protein is Protein BofC (bofC) of Bacillus subtilis (strain 168).